We begin with the raw amino-acid sequence, 297 residues long: Thiosulfate sulfurtransferase (297 aa).

Position 14 is an N6-acetyllysine; alternate (Lys-14). Lys-14 carries the N6-succinyllysine; alternate modification. One can recognise a Rhodanese 1 domain in the interval 25–143 (VGPGLRVLDA…WLKEGHPVTS (119 aa)). Ser-35 carries O-linked (GlcNAc) serine glycosylation. Ser-38 is modified (phosphoserine). Lys-136 is subject to N6-acetyllysine; alternate. The residue at position 136 (Lys-136) is an N6-succinyllysine; alternate. The hinge stretch occupies residues 144–159 (EPSRPEPAIFKATLNR). Residue Lys-163 is modified to N6-acetyllysine. Positions 173–288 (ESKRFQLVDS…WFHRAPPETW (116 aa)) constitute a Rhodanese 2 domain. Lys-175 carries the post-translational modification N6-acetyllysine; alternate. Lys-175 bears the N6-succinyllysine; alternate mark. Arg-187 provides a ligand contact to substrate. The residue at position 224 (Lys-224) is an N6-acetyllysine; alternate. Lys-224 is subject to N6-succinyllysine; alternate. At Lys-236 the chain carries N6-acetyllysine. The residue at position 237 (Lys-237) is an N6-acetyllysine; alternate. Lys-237 carries the post-translational modification N6-succinyllysine; alternate. Residue Cys-248 is the Cysteine persulfide intermediate of the active site. Substrate is bound at residue Lys-250.

In terms of assembly, monomer. In terms of tissue distribution, expressed in numerous tissues.

Its subcellular location is the mitochondrion matrix. The enzyme catalyses thiosulfate + hydrogen cyanide = thiocyanate + sulfite + 2 H(+). Its function is as follows. Together with MRPL18, acts as a mitochondrial import factor for the cytosolic 5S rRNA. Only the nascent unfolded cytoplasmic form is able to bind to the 5S rRNA. Formation of iron-sulfur complexes and cyanide detoxification. Binds molecular oxygen and sulfur. The sequence is that of Thiosulfate sulfurtransferase (TST) from Bos taurus (Bovine).